The sequence spans 466 residues: Uronate isomerase (466 aa).

Belongs to the metallo-dependent hydrolases superfamily. Uronate isomerase family.

The catalysed reaction is D-glucuronate = D-fructuronate. The enzyme catalyses aldehydo-D-galacturonate = keto-D-tagaturonate. The protein operates within carbohydrate metabolism; pentose and glucuronate interconversion. This Brucella melitensis biotype 1 (strain ATCC 23456 / CCUG 17765 / NCTC 10094 / 16M) protein is Uronate isomerase (uxaC).